The chain runs to 420 residues: Dihydrolipoyllysine-residue succinyltransferase component of 2-oxoglutarate dehydrogenase complex (420 aa).

Positions 1 to 76 constitute a Lipoyl-binding domain; it reads MAEVKVPELA…EVGQAVAVVG (76 aa). Residue Lys-42 is modified to N6-lipoyllysine. The disordered stretch occupies residues 75 to 199; it reads VGEGQVNTSN…IREKMSRRKK (125 aa). Over residues 81–90 the composition is skewed to polar residues; it reads NTSNDSSNES. The segment covering 91-102 has biased composition (basic and acidic residues); sequence SQKDEAKEKETP. Residues 103 to 127 show a composition bias toward polar residues; sequence KQSNPNSSESENTQDNSQQRINATP. The 37-residue stretch at 124–160 folds into the Peripheral subunit-binding (PSBD) domain; sequence NATPSARRHARKNGVDLSEVSGKGNDVLRKDDVENSQ. Over residues 149-158 the composition is skewed to basic and acidic residues; that stretch reads DVLRKDDVEN. The segment covering 159–174 has biased composition (low complexity); it reads SQKSSSQTAKSESKSQ. The segment covering 175–186 has biased composition (polar residues); that stretch reads NSGSKQTNNNPS. Active-site residues include His-391 and Asp-395.

The protein belongs to the 2-oxoacid dehydrogenase family. Forms a 24-polypeptide structural core with octahedral symmetry. Part of the 2-oxoglutarate dehydrogenase (OGDH) complex composed of E1 (2-oxoglutarate dehydrogenase), E2 (dihydrolipoamide succinyltransferase) and E3 (dihydrolipoamide dehydrogenase); the complex contains multiple copies of the three enzymatic components (E1, E2 and E3). (R)-lipoate is required as a cofactor.

The enzyme catalyses N(6)-[(R)-dihydrolipoyl]-L-lysyl-[protein] + succinyl-CoA = N(6)-[(R)-S(8)-succinyldihydrolipoyl]-L-lysyl-[protein] + CoA. It participates in amino-acid degradation; L-lysine degradation via saccharopine pathway; glutaryl-CoA from L-lysine: step 6/6. Functionally, E2 component of the 2-oxoglutarate dehydrogenase (OGDH) complex which catalyzes the second step in the conversion of 2-oxoglutarate to succinyl-CoA and CO(2). The polypeptide is Dihydrolipoyllysine-residue succinyltransferase component of 2-oxoglutarate dehydrogenase complex (odhB) (Staphylococcus epidermidis (strain ATCC 35984 / DSM 28319 / BCRC 17069 / CCUG 31568 / BM 3577 / RP62A)).